Reading from the N-terminus, the 212-residue chain is 3,4-dihydroxy-2-butanone 4-phosphate synthase (212 aa).

D-ribulose 5-phosphate contacts are provided by residues 37-38, aspartate 42, 150-154, and glutamate 174; these read RE and RRGHT. Glutamate 38 contacts Mg(2+). Residue histidine 153 participates in Mg(2+) binding.

It belongs to the DHBP synthase family. In terms of assembly, homodimer. Mg(2+) serves as cofactor. Requires Mn(2+) as cofactor.

The catalysed reaction is D-ribulose 5-phosphate = (2S)-2-hydroxy-3-oxobutyl phosphate + formate + H(+). It functions in the pathway cofactor biosynthesis; riboflavin biosynthesis; 2-hydroxy-3-oxobutyl phosphate from D-ribulose 5-phosphate: step 1/1. Its function is as follows. Catalyzes the conversion of D-ribulose 5-phosphate to formate and 3,4-dihydroxy-2-butanone 4-phosphate. This is 3,4-dihydroxy-2-butanone 4-phosphate synthase from Shewanella piezotolerans (strain WP3 / JCM 13877).